Here is a 406-residue protein sequence, read N- to C-terminus: S-adenosylmethionine synthase (406 aa).

H16 contacts ATP. D18 serves as a coordination point for Mg(2+). E44 is a K(+) binding site. The L-methionine site is built by E57 and Q109. The tract at residues Q109–E119 is flexible loop. ATP is bound by residues D174–K176, R249–F250, D258, R264–K265, A281, and K285. Residue D258 participates in L-methionine binding. K289 provides a ligand contact to L-methionine.

Belongs to the AdoMet synthase family. In terms of assembly, homotetramer; dimer of dimers. The cofactor is Mg(2+). Requires K(+) as cofactor.

The protein localises to the cytoplasm. The enzyme catalyses L-methionine + ATP + H2O = S-adenosyl-L-methionine + phosphate + diphosphate. Its pathway is amino-acid biosynthesis; S-adenosyl-L-methionine biosynthesis; S-adenosyl-L-methionine from L-methionine: step 1/1. Catalyzes the formation of S-adenosylmethionine (AdoMet) from methionine and ATP. The overall synthetic reaction is composed of two sequential steps, AdoMet formation and the subsequent tripolyphosphate hydrolysis which occurs prior to release of AdoMet from the enzyme. The protein is S-adenosylmethionine synthase of Sphingopyxis alaskensis (strain DSM 13593 / LMG 18877 / RB2256) (Sphingomonas alaskensis).